A 261-amino-acid polypeptide reads, in one-letter code: Kallikrein 1-related peptidase b3 (261 aa).

Residues 1–18 (MWFLILFLALSLGGIDAA) form the signal peptide. A propeptide spans 19-24 (PPVQSR) (activation peptide). The segment B1 stretch occupies residues 25 to 107 (IVGGFKCEKN…HPGFNMSLMR (83 aa)). The 234-residue stretch at 25-258 (IVGGFKCEKN…FTSWIKDTMA (234 aa)) folds into the Peptidase S1 domain. Intrachain disulfides connect C31-C173, C50-C66, C152-C219, C184-C198, and C209-C234. Residue H65 is the Charge relay system of the active site. Residue N102 is glycosylated (N-linked (GlcNAc...) asparagine). The interval 112–164 (FLEYDYSNDLMLLRLSKPADITDTVKPITLPTEEPKLGSTCLASGWGSITPTK) is segment C. Positions 112–261 (FLEYDYSNDL…WIKDTMAKNP (150 aa)) are segment A. The active-site Charge relay system is the D120. The tract at residues 165–261 (FQFTDDLYCV…WIKDTMAKNP (97 aa)) is segment B2. S213 serves as the catalytic Charge relay system. Zn(2+) contacts are provided by H231 and E236.

It belongs to the peptidase S1 family. Kallikrein subfamily. As to quaternary structure, 7S nerve growth factor is composed of two alpha chains, a beta dimer composed of identical chains, and two gamma chains. Zn(2+) serves as cofactor.

The enzyme catalyses Preferential cleavage of Arg-|-Xaa bonds in small molecule substrates. Highly selective action to release kallidin (lysyl-bradykinin) from kininogen involves hydrolysis of Met-|-Xaa or Leu-|-Xaa.. Functionally, 7S NGF alpha chain stabilizes the 7S complex. The beta dimer promotes neurite growth. The gamma chain is an arginine-specific protease; it may also have plasminogen activator activity, as well as mitogenic activity for chick embryo fibroblasts. This Mus musculus (Mouse) protein is Kallikrein 1-related peptidase b3 (Klk1b3).